The chain runs to 430 residues: Formate-dependent phosphoribosylglycinamide formyltransferase (430 aa).

Residues 26–27 (EL) and Glu-86 contribute to the N(1)-(5-phospho-beta-D-ribosyl)glycinamide site. Residues Arg-118, Lys-159, 199–202 (EEHI), and Glu-207 each bind ATP. An ATP-grasp domain is found at 123–319 (ETLVKEAKVP…EFALHLRAVL (197 aa)). Mg(2+) contacts are provided by Glu-276 and Glu-288. N(1)-(5-phospho-beta-D-ribosyl)glycinamide-binding positions include Asp-295, Lys-375, and 382-383 (RR).

The protein belongs to the PurK/PurT family. As to quaternary structure, homodimer.

The enzyme catalyses N(1)-(5-phospho-beta-D-ribosyl)glycinamide + formate + ATP = N(2)-formyl-N(1)-(5-phospho-beta-D-ribosyl)glycinamide + ADP + phosphate + H(+). The protein operates within purine metabolism; IMP biosynthesis via de novo pathway; N(2)-formyl-N(1)-(5-phospho-D-ribosyl)glycinamide from N(1)-(5-phospho-D-ribosyl)glycinamide (formate route): step 1/1. Functionally, involved in the de novo purine biosynthesis. Catalyzes the transfer of formate to 5-phospho-ribosyl-glycinamide (GAR), producing 5-phospho-ribosyl-N-formylglycinamide (FGAR). Formate is provided by PurU via hydrolysis of 10-formyl-tetrahydrofolate. The protein is Formate-dependent phosphoribosylglycinamide formyltransferase of Pyrococcus horikoshii (strain ATCC 700860 / DSM 12428 / JCM 9974 / NBRC 100139 / OT-3).